The following is a 236-amino-acid chain: MEIFPAIDLKEGQAVRLSKGLMQSAKIYSSEPSELAKRFEDYGAKWLHVVDLDGAFAGEAINFKTIEKIVKATNLKVQVGGGIRDEERIKRYLDLGVSRVILGSVALRDPEFTAKMAGIYRVVVGIDAKDGYVAVQGWGEVSNIKAVDLAKKFADVGVEAVICTDINKDGMLGGVNVDFSLQIARSSKLETIASGGVSDINDILALKATKEIAGVIVGKAYYEGRLDLKDAFKQVG.

The Proton acceptor role is filled by Asp8. Asp127 acts as the Proton donor in catalysis.

It belongs to the HisA/HisF family.

Its subcellular location is the cytoplasm. The enzyme catalyses 1-(5-phospho-beta-D-ribosyl)-5-[(5-phospho-beta-D-ribosylamino)methylideneamino]imidazole-4-carboxamide = 5-[(5-phospho-1-deoxy-D-ribulos-1-ylimino)methylamino]-1-(5-phospho-beta-D-ribosyl)imidazole-4-carboxamide. Its pathway is amino-acid biosynthesis; L-histidine biosynthesis; L-histidine from 5-phospho-alpha-D-ribose 1-diphosphate: step 4/9. The chain is 1-(5-phosphoribosyl)-5-[(5-phosphoribosylamino)methylideneamino] imidazole-4-carboxamide isomerase from Campylobacter concisus (strain 13826).